The primary structure comprises 31 residues: uncharacterized protein (31 aa).

The interval 1-31 (MKKLERMSEVSQMCSEAKKNRKRMSVVSSVA) is disordered.

This is an uncharacterized protein from Sulfolobus islandicus filamentous virus (isolate Iceland/Hveragerdi) (SIFV).